A 132-amino-acid polypeptide reads, in one-letter code: Small ribosomal subunit protein uS8 (132 aa).

This sequence belongs to the universal ribosomal protein uS8 family. As to quaternary structure, part of the 30S ribosomal subunit. Contacts proteins S5 and S12.

Its function is as follows. One of the primary rRNA binding proteins, it binds directly to 16S rRNA central domain where it helps coordinate assembly of the platform of the 30S subunit. In Heliobacterium modesticaldum (strain ATCC 51547 / Ice1), this protein is Small ribosomal subunit protein uS8.